Consider the following 235-residue polypeptide: Uracil-DNA glycosylase (235 aa).

The active-site Proton acceptor is the Asp-71.

The protein belongs to the uracil-DNA glycosylase (UDG) superfamily. UNG family.

The protein localises to the cytoplasm. The catalysed reaction is Hydrolyzes single-stranded DNA or mismatched double-stranded DNA and polynucleotides, releasing free uracil.. Functionally, excises uracil residues from the DNA which can arise as a result of misincorporation of dUMP residues by DNA polymerase or due to deamination of cytosine. The protein is Uracil-DNA glycosylase of Helicobacter hepaticus (strain ATCC 51449 / 3B1).